The sequence spans 327 residues: GMP reductase (327 aa).

Catalysis depends on C175, which acts as the Thioimidate intermediate. Residue 204–227 (IIADGGIRTHGDVAKSIRFGATMV) participates in NADP(+) binding.

Belongs to the IMPDH/GMPR family. GuaC type 2 subfamily.

The catalysed reaction is IMP + NH4(+) + NADP(+) = GMP + NADPH + 2 H(+). Functionally, catalyzes the irreversible NADPH-dependent deamination of GMP to IMP. It functions in the conversion of nucleobase, nucleoside and nucleotide derivatives of G to A nucleotides, and in maintaining the intracellular balance of A and G nucleotides. This Bacillus thuringiensis subsp. konkukian (strain 97-27) protein is GMP reductase.